Reading from the N-terminus, the 884-residue chain is Protein translocase subunit SecA (884 aa).

Residues Gln83, Gly101 to Thr105, and Asp491 each bind ATP.

Belongs to the SecA family.

The protein resides in the plastid. The protein localises to the chloroplast stroma. Its subcellular location is the chloroplast thylakoid membrane. It catalyses the reaction ATP + H2O + cellular proteinSide 1 = ADP + phosphate + cellular proteinSide 2.. Has a central role in coupling the hydrolysis of ATP to the transfer of proteins across the thylakoid membrane. The protein is Protein translocase subunit SecA of Porphyra purpurea (Red seaweed).